Here is a 757-residue protein sequence, read N- to C-terminus: Primary amine oxidase (757 aa).

The signal sequence occupies residues methionine 1–alanine 30. Substrate is bound by residues tyrosine 411 to leucine 422 and valine 493 to tyrosine 498. Residue aspartate 413 is the Proton acceptor of the active site. Tyrosine 496 functions as the Schiff-base intermediate with substrate; via topaquinone in the catalytic mechanism. Position 496 is a 2',4',5'-topaquinone (tyrosine 496). The Cu cation site is built by histidine 554 and histidine 556. Residues aspartate 563, leucine 564, aspartate 565, glutamate 603, tyrosine 697, aspartate 700, glutamate 702, aspartate 708, and alanine 709 each coordinate Ca(2+). Aspartate 563 contributes to the Mn(2+) binding site. Aspartate 565 serves as a coordination point for Mn(2+). A disordered region spans residues proline 680–asparagine 701. A Mn(2+)-binding site is contributed by aspartate 708. Histidine 719 provides a ligand contact to Cu cation.

It belongs to the copper/topaquinone oxidase family. As to quaternary structure, homodimer. Requires Cu cation as cofactor. The cofactor is Zn(2+). It depends on Ca(2+) as a cofactor. L-topaquinone serves as cofactor. Mn(2+) is required as a cofactor. Topaquinone (TPQ) is generated by copper-dependent autoxidation of a specific tyrosyl residue.

It is found in the periplasm. The enzyme catalyses a primary methyl amine + O2 + H2O = an aldehyde + H2O2 + NH4(+). The catalysed reaction is 2-phenylethylamine + O2 + H2O = 2-phenylacetaldehyde + H2O2 + NH4(+). Its pathway is amino-acid degradation; L-phenylalanine degradation; phenylacetate from L-phenylalanine: step 2/3. Inhibited by 2-hydrazinopyridine. The enzyme prefers aromatic over aliphatic amines. The sequence is that of Primary amine oxidase (tynA) from Escherichia coli (strain K12).